Consider the following 123-residue polypeptide: Putative outer membrane protein CPn_0818/CP_1053/CPj0818/CpB0847 (123 aa).

The N-terminal stretch at Met1–Ala30 is a signal peptide.

The protein localises to the cell outer membrane. The chain is Putative outer membrane protein CPn_0818/CP_1053/CPj0818/CpB0847 from Chlamydia pneumoniae (Chlamydophila pneumoniae).